The sequence spans 1409 residues: DNA-directed RNA polymerase subunit beta' (1409 aa).

Zn(2+) contacts are provided by C69, C71, C84, and C87. Mg(2+)-binding residues include D461, D463, and D465. The Zn(2+) site is built by C805, C879, C886, and C889.

Belongs to the RNA polymerase beta' chain family. As to quaternary structure, the RNAP catalytic core consists of 2 alpha, 1 beta, 1 beta' and 1 omega subunit. When a sigma factor is associated with the core the holoenzyme is formed, which can initiate transcription. Mg(2+) is required as a cofactor. It depends on Zn(2+) as a cofactor.

It catalyses the reaction RNA(n) + a ribonucleoside 5'-triphosphate = RNA(n+1) + diphosphate. DNA-dependent RNA polymerase catalyzes the transcription of DNA into RNA using the four ribonucleoside triphosphates as substrates. This chain is DNA-directed RNA polymerase subunit beta', found in Anaplasma phagocytophilum (strain HZ).